A 311-amino-acid polypeptide reads, in one-letter code: Putative dihydroorotate dehydrogenase A (fumarate) (311 aa).

Residues K45, N69–L73, and N128 contribute to the substrate site. K45–T46 is a binding site for FMN. N128 contributes to the FMN binding site. Catalysis depends on C131, which acts as the Nucleophile. Residues K165 and V193 each coordinate FMN. N194 to S195 contacts substrate. FMN contacts are provided by residues G220, G248 to G249, and G270 to T271.

The protein belongs to the dihydroorotate dehydrogenase family. Type 1 subfamily. As to quaternary structure, homodimer. FMN is required as a cofactor.

The protein resides in the cytoplasm. It catalyses the reaction (S)-dihydroorotate + fumarate = orotate + succinate. It functions in the pathway pyrimidine metabolism; UMP biosynthesis via de novo pathway. Catalyzes the conversion of dihydroorotate to orotate with fumarate as the electron acceptor. This Streptococcus pyogenes serotype M5 (strain Manfredo) protein is Putative dihydroorotate dehydrogenase A (fumarate) (pyrD).